Reading from the N-terminus, the 867-residue chain is DNA endonuclease RBBP8 (867 aa).

The essential for binding to the MRN complex and for RPA focus formation on DNA damage stretch occupies residues 25–48 (ELWSKLKECHDKELQELLLKINKL). Coiled coils occupy residues 38–87 (LQEL…EDRL) and 120–141 (ITEL…SEQL). Disordered regions lie at residues 141-171 (LHNM…PDSP) and 448-486 (RYGK…HSML). The segment covering 154 to 166 (ENPADTGEGEDGV) has biased composition (acidic residues). The PXDLS motif signature appears at 489–493 (PLDLS). Positions 508–531 (SSRGRTKQTFALVPEKPDPKKPLH) are damage-recruitment motif. 2 positions are modified to phosphothreonine: Thr817 and Thr829. The segment at 843–867 (SPCQRPRRRQPYNAKFSSKIKEQKT) is disordered.

This sequence belongs to the COM1/SAE2/CtIP family. Homotetramer; formed by antiparallel association of helical extensions protruding from the N-termini of two parallel coiled-coil dimers. Interacts with the MRN complex; the interaction links DNA sensing to resection. Interacts with samhd1. In terms of processing, phosphorylation at Thr-817 and Thr-829 promote interaction with nbn and recruitment to double-strand breaks (DSBs).

The protein resides in the nucleus. The protein localises to the chromosome. Endonuclease that cooperates with the MRE11-RAD50-NBN (MRN) complex in DNA-end resection, the first step of double-strand break (DSB) repair through the homologous recombination (HR) pathway. Functions downstream of the MRN complex and ATM, promotes ATR activation and its recruitment to DSBs in the S/G2 phase facilitating the generation of ssDNA. Specifically promotes the endonuclease activity of the MRN complex to clear DNA ends containing protein adducts: recruited to DSBs by nbn following phosphorylation, and promotes the endonuclease of mre11 to clear protein-DNA adducts and generate clean double-strand break ends. The protein is DNA endonuclease RBBP8 (rbbp8) of Xenopus tropicalis (Western clawed frog).